The chain runs to 173 residues: Small ribosomal subunit protein uS5 (173 aa).

The 64-residue stretch at 17–80 (LREKMIAVNR…EESRRNMIKV (64 aa)) folds into the S5 DRBM domain.

Belongs to the universal ribosomal protein uS5 family. As to quaternary structure, part of the 30S ribosomal subunit. Contacts proteins S4 and S8.

Functionally, with S4 and S12 plays an important role in translational accuracy. Located at the back of the 30S subunit body where it stabilizes the conformation of the head with respect to the body. In Delftia acidovorans (strain DSM 14801 / SPH-1), this protein is Small ribosomal subunit protein uS5.